A 432-amino-acid chain; its full sequence is Fibroleukin (432 aa).

The N-terminal stretch at 1 to 19 (MRLPGWLWLSSAVLAACRA) is a signal peptide. Asn-24 carries N-linked (GlcNAc...) asparagine glycosylation. Residues 71–157 (GSMEEVLKEV…QGRLETLHLV (87 aa)) are a coiled coil. The interval 100-122 (QADDHRDPGGNGGNGAETAEDSR) is disordered. Asn-172, Asn-228, Asn-256, and Asn-329 each carry an N-linked (GlcNAc...) asparagine glycan. The 233-residue stretch at 197 to 429 (PVQHLIYKDC…QAKMMIRPKN (233 aa)) folds into the Fibrinogen C-terminal domain. A disulfide bridge links Cys-206 with Cys-235. A disulfide bond links Cys-364 and Cys-377.

As to quaternary structure, homotetramer; disulfide-linked. In terms of tissue distribution, constitutively expressed in cytotoxic T-cells.

It is found in the secreted. In terms of biological role, converts prothrombin to thrombin. This chain is Fibroleukin (Fgl2), found in Mus musculus (Mouse).